A 37-amino-acid chain; its full sequence is Delta/kappa-conotoxin Mo3964 (37 aa).

3 cysteine pairs are disulfide-bonded: C4-C12, C11-C27, and C21-C34.

Expressed by the venom duct.

It localises to the secreted. This toxin reduces the outward currents that are due to the opening of voltage-gated potassium channels in DRG neurons. In addition, leftward shift in the presence of this toxin is observed in averaged normalized conductance-voltage plot of outward sodium currents (Nav1.2/SCN2A). The chain is Delta/kappa-conotoxin Mo3964 from Conus monile (Necklace cone).